The primary structure comprises 120 residues: uncharacterized protein (120 aa).

Helical transmembrane passes span 8–28 (PFVTGVLLPSAVFSFLFCTLV) and 55–75 (FLENTLIFLGSGNLTAHIGIL).

The protein localises to the membrane. This is an uncharacterized protein from Saccharomyces cerevisiae (strain ATCC 204508 / S288c) (Baker's yeast).